Here is a 221-residue protein sequence, read N- to C-terminus: Alpha-ketoglutarate-dependent dioxygenase alkB homolog 7, mitochondrial (221 aa).

The transit peptide at 1–23 directs the protein to the mitochondrion; the sequence is MAGSRRLAMRLLSGCAWVRGSDS. Residues H121 and D123 each coordinate Fe cation. Residue Y165 coordinates 2-oxoglutarate. H177 is a Fe cation binding site. Residues 197 to 199 and R203 each bind 2-oxoglutarate; that span reads RIS.

This sequence belongs to the alkB family. Fe(2+) serves as cofactor. Widely expressed.

The protein localises to the mitochondrion matrix. Its function is as follows. May function as protein hydroxylase; can catalyze auto-hydroxylation at Leu-110 (in vitro), but this activity may be due to the absence of the true substrate. Required to induce programmed necrosis in response to DNA damage caused by cytotoxic alkylating agents. Acts by triggering the collapse of mitochondrial membrane potential and loss of mitochondrial function that leads to energy depletion and cell death. ALKBH7-mediated necrosis is probably required to prevent the accumulation of cells with DNA damage. Does not display DNA demethylase activity. Involved in fatty acid metabolism. This Mus musculus (Mouse) protein is Alpha-ketoglutarate-dependent dioxygenase alkB homolog 7, mitochondrial (Alkbh7).